Reading from the N-terminus, the 188-residue chain is Large ribosomal subunit protein bL32m (188 aa).

Residues Cys-110, Cys-113, Cys-123, and Cys-126 each coordinate Zn(2+). The tract at residues 164 to 188 (TPSEQDQGKRIIERDRKRPSWFTQN) is disordered. The span at 169-181 (DQGKRIIERDRKR) shows a compositional bias: basic and acidic residues.

It belongs to the bacterial ribosomal protein bL32 family. In terms of assembly, component of the mitochondrial large ribosomal subunit (mt-LSU). Mature mammalian 55S mitochondrial ribosomes consist of a small (28S) and a large (39S) subunit. The 28S small subunit contains a 12S ribosomal RNA (12S mt-rRNA) and 30 different proteins. The 39S large subunit contains a 16S rRNA (16S mt-rRNA), a copy of mitochondrial valine transfer RNA (mt-tRNA(Val)), which plays an integral structural role, and 52 different proteins. bL32m has a zinc binding site. In terms of processing, MRPL32 precursor is processed by the m-AAA protease (composed of AFG3L2 and SPG7), which cleaves the N-terminal transit peptide. Cleavage by the m-AAA protease takes place prior to assembly into the large subunit, an essential step for mitochondrial ribosome (mitoribosome) assembly. Proper processing by the m-AAA protease is dependent on the zinc-binding region within the tightly folded C-terminal domain of MRPL32: zinc-dependent folding halts degradation initiated from the N-terminus and triggers the release of mature MRPL32.

The protein resides in the mitochondrion. Component of the mitochondrial large ribosomal subunit (mt-LSU). The mitochondrial ribosome (mitoribosome) is a large ribonucleoprotein complex responsible for the synthesis of proteins inside mitochondria. This is Large ribosomal subunit protein bL32m (MRPL32) from Homo sapiens (Human).